Here is a 170-residue protein sequence, read N- to C-terminus: Putative phosphoesterase OB1230 (170 aa).

H34 functions as the Proton donor in the catalytic mechanism. 2 consecutive short sequence motifs (HXTX) follow at residues 34–37 (HLTL) and 115–118 (HITI). H115 (proton acceptor) is an active-site residue.

This sequence belongs to the 2H phosphoesterase superfamily. YjcG family.

This Oceanobacillus iheyensis (strain DSM 14371 / CIP 107618 / JCM 11309 / KCTC 3954 / HTE831) protein is Putative phosphoesterase OB1230.